The primary structure comprises 957 residues: Retinoblastoma-related protein 1 (957 aa).

Residues 369-569 (TPVSTAMTTA…EKGSSMYNSL (201 aa)) form a domain A region. The tract at residues 369–808 (TPVSTAMTTA…NEVFIPTVKP (440 aa)) is pocket. The tract at residues 570–677 (IVARPTLSAE…PAAGGETCAE (108 aa)) is spacer. The tract at residues 678–808 (TGIGVFLSKI…NEVFIPTVKP (131 aa)) is domain B. Residues 814 to 854 (GPGTSPNRNNEPKSGGDAASFPESPRLSRFPNLPDMSPKKV) form a disordered region.

This sequence belongs to the retinoblastoma protein (RB) family.

The protein resides in the nucleus. In terms of biological role, regulator of biological processes that recruits a histone deacetylase to control gene transcription. May play a role in the entry into mitosis, negatively regulating the cell proliferation. Formation of stable complexes with geminiviridae replication-associated proteins may create a cellular environment which favors viral DNA replication. The chain is Retinoblastoma-related protein 1 (RBR1) from Triticum aestivum (Wheat).